We begin with the raw amino-acid sequence, 203 residues long: MRTIDKRIAPNVRLAATLVARAPALTLAYDARCKSRLAATLDTGEDVALVLPRGTVLRDGDVLVADDGALVRVAAAHEAVLLVRAPDALTLTRAAYHLGNRHTPVEVGAGCLKLEYDPALADMLTRLGATVERASAPFQPEAGAYGGGHRHGHDATFAEDYALAQQVFDEHHGHSHSHSHSHSHDHDHQHGPSCSHGHHHGHR.

The disordered stretch occupies residues 170-203; it reads EHHGHSHSHSHSHSHDHDHQHGPSCSHGHHHGHR.

The protein belongs to the UreE family.

The protein localises to the cytoplasm. Functionally, involved in urease metallocenter assembly. Binds nickel. Probably functions as a nickel donor during metallocenter assembly. The sequence is that of Urease accessory protein UreE from Burkholderia mallei (strain SAVP1).